The sequence spans 105 residues: Small ribosomal subunit protein uS10 (105 aa).

This sequence belongs to the universal ribosomal protein uS10 family. In terms of assembly, part of the 30S ribosomal subunit.

Its function is as follows. Involved in the binding of tRNA to the ribosomes. This chain is Small ribosomal subunit protein uS10, found in Crocosphaera subtropica (strain ATCC 51142 / BH68) (Cyanothece sp. (strain ATCC 51142)).